Reading from the N-terminus, the 186-residue chain is Der GTPase-activating protein YihI (186 aa).

The disordered stretch occupies residues 1–65; that stretch reads MARTKKTRRI…AGSRHSAVDT (65 aa). Composition is skewed to basic and acidic residues over residues 9 to 25 and 34 to 45; these read RITDIMPMRKTDKRPEN and TRYELDAKSREE.

It belongs to the YihI family. In terms of assembly, interacts with Der.

In terms of biological role, a GTPase-activating protein (GAP) that modifies Der/EngA GTPase function. May play a role in ribosome biogenesis. In Histophilus somni (strain 129Pt) (Haemophilus somnus), this protein is Der GTPase-activating protein YihI.